Here is a 592-residue protein sequence, read N- to C-terminus: Aspartate--tRNA(Asp/Asn) ligase (592 aa).

Glutamate 173 is a binding site for L-aspartate. The interval 197-200 (QLFK) is aspartate. An L-aspartate-binding site is contributed by arginine 219. ATP is bound by residues 219-221 (RDE) and glutamine 228. Histidine 448 provides a ligand contact to L-aspartate. Residue glutamate 481 participates in ATP binding. An L-aspartate-binding site is contributed by arginine 488. ATP is bound at residue 533-536 (GLDR).

Belongs to the class-II aminoacyl-tRNA synthetase family. Type 1 subfamily. As to quaternary structure, homodimer.

The protein resides in the cytoplasm. The enzyme catalyses tRNA(Asx) + L-aspartate + ATP = L-aspartyl-tRNA(Asx) + AMP + diphosphate. In terms of biological role, aspartyl-tRNA synthetase with relaxed tRNA specificity since it is able to aspartylate not only its cognate tRNA(Asp) but also tRNA(Asn). Reaction proceeds in two steps: L-aspartate is first activated by ATP to form Asp-AMP and then transferred to the acceptor end of tRNA(Asp/Asn). This Chromohalobacter salexigens (strain ATCC BAA-138 / DSM 3043 / CIP 106854 / NCIMB 13768 / 1H11) protein is Aspartate--tRNA(Asp/Asn) ligase.